The sequence spans 244 residues: 3-oxoacyl-[acyl-carrier-protein] reductase FabG (244 aa).

Residues 12-15, threonine 37, 59-60, and asparagine 86 contribute to the NADP(+) site; these read GASR and NV. Serine 138 is a binding site for substrate. The active-site Proton acceptor is tyrosine 151. Residues 151 to 155 and isoleucine 184 contribute to the NADP(+) site; that span reads YAAAK.

The protein belongs to the short-chain dehydrogenases/reductases (SDR) family. As to quaternary structure, homotetramer.

It catalyses the reaction a (3R)-hydroxyacyl-[ACP] + NADP(+) = a 3-oxoacyl-[ACP] + NADPH + H(+). It functions in the pathway lipid metabolism; fatty acid biosynthesis. In terms of biological role, catalyzes the NADPH-dependent reduction of beta-ketoacyl-ACP substrates to beta-hydroxyacyl-ACP products, the first reductive step in the elongation cycle of fatty acid biosynthesis. The chain is 3-oxoacyl-[acyl-carrier-protein] reductase FabG (fabG) from Vibrio cholerae serotype O1 (strain ATCC 39315 / El Tor Inaba N16961).